The sequence spans 141 residues: Large ribosomal subunit protein uL16 (141 aa).

The protein belongs to the universal ribosomal protein uL16 family. As to quaternary structure, part of the 50S ribosomal subunit. Contacts the CTC protein (RL25).

Its function is as follows. Binds the 5S and 23S rRNAs and is also seen to make contacts with the A and P site tRNAs. Interacts with A site tRNA mimics, and is probably one of the key factors, along with a helix of the 23S rRNA, in positioning tRNA stems in the peptidyl-transferase center. This Deinococcus radiodurans (strain ATCC 13939 / DSM 20539 / JCM 16871 / CCUG 27074 / LMG 4051 / NBRC 15346 / NCIMB 9279 / VKM B-1422 / R1) protein is Large ribosomal subunit protein uL16 (rplP).